The following is a 485-amino-acid chain: UDP-N-acetylmuramoyl-L-alanyl-D-glutamate--2,6-diaminopimelate ligase (485 aa).

Ser-32 serves as a coordination point for UDP-N-acetyl-alpha-D-muramoyl-L-alanyl-D-glutamate. ATP is bound at residue 111 to 117 (GTNGKTT). Residues 153–154 (TT), Ser-180, and Arg-188 each bind UDP-N-acetyl-alpha-D-muramoyl-L-alanyl-D-glutamate. Residue Lys-220 is modified to N6-carboxylysine. Meso-2,6-diaminopimelate contacts are provided by residues Arg-382, 405-408 (DNPR), Gly-455, and Glu-459. Positions 405–408 (DNPR) match the Meso-diaminopimelate recognition motif motif.

Belongs to the MurCDEF family. MurE subfamily. The cofactor is Mg(2+). Carboxylation is probably crucial for Mg(2+) binding and, consequently, for the gamma-phosphate positioning of ATP.

Its subcellular location is the cytoplasm. The catalysed reaction is UDP-N-acetyl-alpha-D-muramoyl-L-alanyl-D-glutamate + meso-2,6-diaminopimelate + ATP = UDP-N-acetyl-alpha-D-muramoyl-L-alanyl-gamma-D-glutamyl-meso-2,6-diaminopimelate + ADP + phosphate + H(+). The protein operates within cell wall biogenesis; peptidoglycan biosynthesis. Functionally, catalyzes the addition of meso-diaminopimelic acid to the nucleotide precursor UDP-N-acetylmuramoyl-L-alanyl-D-glutamate (UMAG) in the biosynthesis of bacterial cell-wall peptidoglycan. This chain is UDP-N-acetylmuramoyl-L-alanyl-D-glutamate--2,6-diaminopimelate ligase, found in Chlamydia felis (strain Fe/C-56) (Chlamydophila felis).